Reading from the N-terminus, the 348-residue chain is Rhodopsin (348 aa).

At M1 the chain carries N-acetylmethionine. At 1–36 the chain is on the extracellular side; that stretch reads MNGTEGPNFYVPFSNKTGVVRSPFEEPQYYLAEPWQ. 2 N-linked (GlcNAc...) asparagine glycosylation sites follow: N2 and N15. A helical transmembrane segment spans residues 37–61; it reads FSCLAAYMFMLIVLGFPINFLTLYV. The Cytoplasmic portion of the chain corresponds to 62–73; that stretch reads TIQHKKLRTPLN. A helical membrane pass occupies residues 74 to 96; that stretch reads YILLNLAIADLFMVFGGFTTTLY. Topologically, residues 97-110 are extracellular; it reads TSLHGYFVFGPTGC. Residues C110 and C187 are joined by a disulfide bond. The helical transmembrane segment at 111–133 threads the bilayer; the sequence is DLEGFFATLGGEIALWSLVVLAI. The 'Ionic lock' involved in activated form stabilization motif lies at 134–136; the sequence is ERY. The Cytoplasmic segment spans residues 134 to 152; the sequence is ERYIVVCKPMSNFRFGENH. A helical transmembrane segment spans residues 153–173; the sequence is AIMGVAFTWVMALACAAPPLV. Residues 174–202 lie on the Extracellular side of the membrane; that stretch reads GWSRYIPEGMQCSCGIDYYTLKPEVNNES. E201 contributes to the Zn(2+) binding site. A helical membrane pass occupies residues 203–224; sequence FVIYMFVVHFTIPMVVIFFCYG. Residues 225–252 are Cytoplasmic-facing; sequence QLVFTVKEAAAQQQESATTQKAEKEVTR. The chain crosses the membrane as a helical span at residues 253-274; sequence MVIIMVIAFLICWLPYAGVAFY. The Extracellular segment spans residues 275–286; that stretch reads IFTHQGSNFGPI. Q279 contributes to the Zn(2+) binding site. The chain crosses the membrane as a helical span at residues 287–308; that stretch reads LMTLPAFFAKTSAVYNPVIYIM. K296 bears the N6-(retinylidene)lysine mark. Residues 309–348 lie on the Cytoplasmic side of the membrane; it reads LNKQFRTCMLTTLCCGKIPLGDDEASATASKTETSQVAPA. 2 S-palmitoyl cysteine lipidation sites follow: C322 and C323. The interaction with SAG stretch occupies residues 330-348; the sequence is DDEASATASKTETSQVAPA. Phosphoserine is present on S334. T336 carries the post-translational modification Phosphothreonine. S338 carries the post-translational modification Phosphoserine. Phosphothreonine occurs at positions 340 and 342. At S343 the chain carries Phosphoserine.

The protein belongs to the G-protein coupled receptor 1 family. Opsin subfamily. Homodimer. May form a complex composed of RHO, GRK1 and RCVRN in a Ca(2+)-dependent manner; RCVRN prevents the interaction between GRK1 and RHO. Interacts with GRK1. Interacts (phosphorylated form) with SAG. Interacts with GNAT1. Interacts with GNAT3. SAG and G-proteins compete for a common binding site. Interacts with PRCD; the interaction promotes PRCD stability. Forms a complex with ASAP1 and ARF4. Forms a complex with ASAP1, RAB11A, Rabin8/RAB3IP, ARF4 and RAB11FIP3; the complex regulates Golgi-to-cilia rhodopsin/RHO transport in photoreceptors. Post-translationally, phosphorylated on some or all of the serine and threonine residues present in the C-terminal region. Contains one covalently linked retinal chromophore. Upon light absorption, the covalently bound 11-cis-retinal is converted to all-trans-retinal. After hydrolysis of the Schiff base and release of the covalently bound all-trans-retinal, active rhodopsin is regenerated by binding of a fresh molecule of 11-cis-retinal.

It localises to the membrane. The protein localises to the cell projection. The protein resides in the cilium. Its subcellular location is the photoreceptor outer segment. In terms of biological role, photoreceptor required for image-forming vision at low light intensity. Required for photoreceptor cell viability after birth. Light-induced isomerization of 11-cis to all-trans retinal triggers a conformational change that activates signaling via G-proteins. Subsequent receptor phosphorylation mediates displacement of the bound G-protein alpha subunit by the arrestin SAG and terminates signaling. The protein is Rhodopsin (RHO) of Caluromys philander (Bare-tailed woolly opossum).